The sequence spans 89 residues: Small ribosomal subunit protein uS15 (89 aa).

Residues 1-22 (MPLSKEQKQEVMEKYKLHEHDT) form a disordered region.

This sequence belongs to the universal ribosomal protein uS15 family. In terms of assembly, part of the 30S ribosomal subunit. Forms a bridge to the 50S subunit in the 70S ribosome, contacting the 23S rRNA.

In terms of biological role, one of the primary rRNA binding proteins, it binds directly to 16S rRNA where it helps nucleate assembly of the platform of the 30S subunit by binding and bridging several RNA helices of the 16S rRNA. Functionally, forms an intersubunit bridge (bridge B4) with the 23S rRNA of the 50S subunit in the ribosome. This chain is Small ribosomal subunit protein uS15, found in Natranaerobius thermophilus (strain ATCC BAA-1301 / DSM 18059 / JW/NM-WN-LF).